A 466-amino-acid polypeptide reads, in one-letter code: Probable WRKY transcription factor 32 (466 aa).

Disordered regions lie at residues 1–45 (MEED…MEDL) and 140–166 (SVPT…PRTP). Residues 8–38 (DEAKTYTVEKSEKVEPEKDGLSQFRDEEKSL) show a composition bias toward basic and acidic residues. Residues 162–226 (VPRTPARDGY…NKGLHTHEPP (65 aa)) constitute a DNA-binding region (WRKY 1). 4 residues coordinate Zn(2+): Cys-193, Cys-198, His-221, and His-223. A disordered region spans residues 284–317 (HCENEAVEEPEPKRRLKKDNSQSSDSVSKPGKKN). The segment at residues 325–390 (GDVGICGDGY…YKGVHNHDMP (66 aa)) is a DNA-binding region (WRKY 2). Residues Cys-356, Cys-361, His-385, and His-387 each coordinate Zn(2+). The segment at 410–439 (TSMRTRTDDQVNIPTSSQCSVGRESEKQSK) is disordered. The segment covering 419-429 (QVNIPTSSQCS) has biased composition (polar residues).

This sequence belongs to the WRKY group I family.

Its subcellular location is the nucleus. In terms of biological role, transcription factor. Interacts specifically with the W box (5'-(T)TGAC[CT]-3'), a frequently occurring elicitor-responsive cis-acting element. The sequence is that of Probable WRKY transcription factor 32 (WRKY32) from Arabidopsis thaliana (Mouse-ear cress).